The following is a 310-amino-acid chain: DnaJ-like protein MG002 (310 aa).

One can recognise a J domain in the interval 1 to 66; that stretch reads MNLYDLLELP…KEKYDSMLKV (66 aa).

This is DnaJ-like protein MG002 from Mycoplasma genitalium (strain ATCC 33530 / DSM 19775 / NCTC 10195 / G37) (Mycoplasmoides genitalium).